Reading from the N-terminus, the 110-residue chain is UPF0060 membrane protein Psyr_3752 (110 aa).

The next 4 helical transmembrane spans lie at 5–25 (LWFF…WLWL), 28–48 (GKSA…ALLL), 59–79 (AYAA…GLVE), and 84–104 (LGTD…ILLG).

This sequence belongs to the UPF0060 family.

Its subcellular location is the cell inner membrane. This is UPF0060 membrane protein Psyr_3752 from Pseudomonas syringae pv. syringae (strain B728a).